The primary structure comprises 438 residues: Actin-like protein 7A (438 aa).

Positions Ala36–Pro56 are required for interaction with TES.

It belongs to the actin family. Interacts (via N-terminus) with TES (via LIM domain 2). Heterodimer with TES; the heterodimer interacts with ENAH to form a heterotrimer. Interacts with ACTL9. Interacts with CYLC1; the interaction may be relevant for proper acrosome attachment to the nuclear envelope.

The protein resides in the cytoplasm. It localises to the cytoskeleton. The protein localises to the golgi apparatus. Its subcellular location is the nucleus. Its function is as follows. Essential for normal spermatogenesis and male fertility. Required for normal sperm head morphology, acroplaxome formation, acrosome attachment, and acrosome granule stability. May anchor and stabilize acrosomal adherence to the acroplaxome at least in part by facilitating the presence of F-actin in the subacrosomal space. May play an important role in formation and fusion of Golgi-derived vesicles during acrosome biogenesis. The polypeptide is Actin-like protein 7A (ACTL7A) (Bos taurus (Bovine)).